Here is a 485-residue protein sequence, read N- to C-terminus: Protein DETOXIFICATION 8 (485 aa).

Residues 1–26 (MENGFSLVPKEEEEEEDYSNEKSEDQ) are disordered. A run of 12 helical transmembrane segments spans residues 41–61 (FMAA…VISI), 74–94 (AVAI…FGLA), 118–138 (YGSM…WVFM), 159–179 (SIWL…TRFF), 188–208 (LFLS…LLVY), 212–232 (FGIV…VGLL), 263–283 (LAIP…LLIL), 297–317 (VLSI…AIGA), 338–358 (AANS…ISLY), 381–401 (ITPF…LSGV), 414–434 (ANIG…CFVV), and 442–462 (WIGI…VTFF).

Belongs to the multi antimicrobial extrusion (MATE) (TC 2.A.66.1) family.

The protein localises to the membrane. This is Protein DETOXIFICATION 8 from Arabidopsis thaliana (Mouse-ear cress).